The sequence spans 355 residues: Protein RecA (355 aa).

65–72 contributes to the ATP binding site; the sequence is GPESSGKT.

The protein belongs to the RecA family.

The protein resides in the cytoplasm. Functionally, can catalyze the hydrolysis of ATP in the presence of single-stranded DNA, the ATP-dependent uptake of single-stranded DNA by duplex DNA, and the ATP-dependent hybridization of homologous single-stranded DNAs. It interacts with LexA causing its activation and leading to its autocatalytic cleavage. This Pseudomonas putida (strain W619) protein is Protein RecA.